The sequence spans 404 residues: Phosphopentomutase (404 aa).

Mn(2+)-binding residues include Asp10, Asp303, His308, Asp344, His345, and His356.

Belongs to the phosphopentomutase family. Mn(2+) is required as a cofactor.

Its subcellular location is the cytoplasm. It catalyses the reaction 2-deoxy-alpha-D-ribose 1-phosphate = 2-deoxy-D-ribose 5-phosphate. It carries out the reaction alpha-D-ribose 1-phosphate = D-ribose 5-phosphate. It participates in carbohydrate degradation; 2-deoxy-D-ribose 1-phosphate degradation; D-glyceraldehyde 3-phosphate and acetaldehyde from 2-deoxy-alpha-D-ribose 1-phosphate: step 1/2. Isomerase that catalyzes the conversion of deoxy-ribose 1-phosphate (dRib-1-P) and ribose 1-phosphate (Rib-1-P) to deoxy-ribose 5-phosphate (dRib-5-P) and ribose 5-phosphate (Rib-5-P), respectively. In Shewanella sp. (strain MR-4), this protein is Phosphopentomutase.